The following is a 434-amino-acid chain: Glycoprotein U20 (434 aa).

Positions 1–15 (MITVFVACLFQCVSS) are cleaved as a signal peptide. A helical transmembrane segment spans residues 322–342 (LLWIFIVIPIAAGCMFLYILT).

It is found in the host endoplasmic reticulum membrane. The protein localises to the host lysosome membrane. Functionally, plays a role in the down-regulation of the host stress-induced NKG2D ligand UBPL1, which enables immune cells expressing the NKG2D receptor to recognize and annihilate infected cells prior to viral spread. The chain is Glycoprotein U20 (U20) from Human herpesvirus 6B (strain Z29) (HHV-6 variant B).